The following is a 336-amino-acid chain: RHOMBOID-like protein 12, mitochondrial (336 aa).

The transit peptide at 1–85 (MKAIFNRRVV…RGFFASALGN (85 aa)) directs the protein to the mitochondrion. A run of 6 helical transmembrane segments spans residues 135 to 155 (VVLG…VFNQ), 185 to 205 (IDIG…TSIA), 216 to 236 (LYLA…AYMA), 254 to 274 (PGLG…FLHP), 276 to 296 (ATLY…IFLI), and 307 to 327 (NSNI…IAWA). Residue S259 is the Nucleophile of the active site. The Charge relay system role is filled by H315.

Belongs to the peptidase S54 family.

It localises to the mitochondrion membrane. Its function is as follows. Probable rhomboid-type serine protease that catalyzes intramembrane proteolysis. Unable to cleave either of the yeast Pcp1 substrates in yeast cells. The sequence is that of RHOMBOID-like protein 12, mitochondrial from Arabidopsis thaliana (Mouse-ear cress).